We begin with the raw amino-acid sequence, 468 residues long: 6-phosphogluconate dehydrogenase, decarboxylating (468 aa).

NADP(+)-binding positions include 10-15, 33-35, 74-76, and Asn102; these read GMAVMG, NRS, and VKA. Substrate-binding positions include Asn102 and 128–130; that span reads SGG. Lys183 (proton acceptor) is an active-site residue. 186–187 is a binding site for substrate; sequence HN. The active-site Proton donor is the Glu190. Residues Tyr191, Lys260, Arg287, Arg445, and His451 each contribute to the substrate site.

The protein belongs to the 6-phosphogluconate dehydrogenase family. As to quaternary structure, homodimer.

The enzyme catalyses 6-phospho-D-gluconate + NADP(+) = D-ribulose 5-phosphate + CO2 + NADPH. The protein operates within carbohydrate degradation; pentose phosphate pathway; D-ribulose 5-phosphate from D-glucose 6-phosphate (oxidative stage): step 3/3. Its function is as follows. Catalyzes the oxidative decarboxylation of 6-phosphogluconate to ribulose 5-phosphate and CO(2), with concomitant reduction of NADP to NADPH. The sequence is that of 6-phosphogluconate dehydrogenase, decarboxylating (gnd) from Shigella flexneri.